The primary structure comprises 379 residues: Cytochrome b (379 aa).

Helical transmembrane passes span 33–53, 77–98, 113–133, and 178–198; these read FGSL…FLAM, WLIR…YFHI, WNMG…GYVL, and FFAF…IHLL. The heme b site is built by H83 and H97. Positions 182 and 196 each coordinate heme b. Residue H201 participates in a ubiquinone binding. The next 4 helical transmembrane spans lie at 226-246, 288-308, 320-340, and 347-367; these read IKDI…VMFS, LGGV…PILH, LSQC…WIGG, and FITI…ILMP.

The protein belongs to the cytochrome b family. The cytochrome bc1 complex contains 11 subunits: 3 respiratory subunits (MT-CYB, CYC1 and UQCRFS1), 2 core proteins (UQCRC1 and UQCRC2) and 6 low-molecular weight proteins (UQCRH/QCR6, UQCRB/QCR7, UQCRQ/QCR8, UQCR10/QCR9, UQCR11/QCR10 and a cleavage product of UQCRFS1). This cytochrome bc1 complex then forms a dimer. Requires heme b as cofactor.

The protein resides in the mitochondrion inner membrane. Component of the ubiquinol-cytochrome c reductase complex (complex III or cytochrome b-c1 complex) that is part of the mitochondrial respiratory chain. The b-c1 complex mediates electron transfer from ubiquinol to cytochrome c. Contributes to the generation of a proton gradient across the mitochondrial membrane that is then used for ATP synthesis. The polypeptide is Cytochrome b (MT-CYB) (Ctenomys leucodon (White-toothed tuco-tuco)).